A 110-amino-acid chain; its full sequence is Insulin (110 aa).

A signal peptide spans 1–24; sequence MALWMHLLTVLALLALWGPNTGQA. 3 disulfides stabilise this stretch: cysteine 31-cysteine 96, cysteine 43-cysteine 109, and cysteine 95-cysteine 100. Positions 57–87 are cleaved as a propeptide — c peptide; sequence ELEDPQVEQTELGMGLGAGGLQPLALEMALQ.

This sequence belongs to the insulin family. Heterodimer of a B chain and an A chain linked by two disulfide bonds.

Its subcellular location is the secreted. In terms of biological role, insulin decreases blood glucose concentration. It increases cell permeability to monosaccharides, amino acids and fatty acids. It accelerates glycolysis, the pentose phosphate cycle, and glycogen synthesis in liver. The sequence is that of Insulin (INS) from Cavia porcellus (Guinea pig).